We begin with the raw amino-acid sequence, 1059 residues long: Translation initiation factor IF-2 (1059 aa).

Polar residues-rich tracts occupy residues 55 to 75 (LPHSPSLSAAPEKSNSQNQDS) and 107 to 126 (KINNNLVTTPPNTSVLNNQV). Disordered stretches follow at residues 55 to 81 (LPHSPSLSAAPEKSNSQNQDSGIGYNE), 93 to 394 (PKPL…RLRL), and 418 to 468 (SLSL…QSAE). Residues 178–187 (DSNEKSKVEV) show a composition bias toward basic and acidic residues. Polar residues predominate over residues 202-211 (LNRNLRNTGV). Basic residues predominate over residues 216–229 (QKNKKPKQEGKKRK). Basic and acidic residues-rich tracts occupy residues 230 to 252 (DKEEKPFEKPAIVSKKENKDTSI) and 259 to 273 (SKKENKDTFQNRESV). Polar residues predominate over residues 274 to 284 (KTSASDTSSQL). Basic and acidic residues-rich tracts occupy residues 291–300 (KPTVKLKQEQ) and 359–368 (LTKDKKVSKW). A compositionally biased stretch (low complexity) spans 452-463 (SHESVQSESNEQ). Residues 556 to 733 (RRPPVVTIMG…EVEDLQANPE (178 aa)) enclose the tr-type G domain. The tract at residues 565-572 (GHVDHGKT) is G1. Residue 565-572 (GHVDHGKT) participates in GTP binding. The segment at 590–594 (GITQH) is G2. The segment at 615–618 (DTPG) is G3. GTP is bound by residues 615 to 619 (DTPGH) and 669 to 672 (NKID). Positions 669–672 (NKID) are G4. Positions 705 to 707 (SAI) are G5.

It belongs to the TRAFAC class translation factor GTPase superfamily. Classic translation factor GTPase family. IF-2 subfamily.

The protein resides in the cytoplasm. One of the essential components for the initiation of protein synthesis. Protects formylmethionyl-tRNA from spontaneous hydrolysis and promotes its binding to the 30S ribosomal subunits. Also involved in the hydrolysis of GTP during the formation of the 70S ribosomal complex. This Trichodesmium erythraeum (strain IMS101) protein is Translation initiation factor IF-2.